A 424-amino-acid polypeptide reads, in one-letter code: Histidine--tRNA ligase (424 aa).

It belongs to the class-II aminoacyl-tRNA synthetase family. Homodimer.

The protein localises to the cytoplasm. The enzyme catalyses tRNA(His) + L-histidine + ATP = L-histidyl-tRNA(His) + AMP + diphosphate + H(+). This chain is Histidine--tRNA ligase, found in Escherichia coli (strain 55989 / EAEC).